Consider the following 564-residue polypeptide: Mitochondrial distribution and morphology protein 34 (564 aa).

Residues 1–208 (MAFNFNWSPL…VPEYRDRESE (208 aa)) form the SMP-LTD domain. Disordered regions lie at residues 208–240 (ESVNTLDQSSGPGQDPLASPPQDPVDASGNALN), 336–397 (SGGS…SAPT), 404–423 (QFSEEKNDDPVTPPLAPQND), 434–517 (RISQ…DPRQ), and 532–564 (IQEEKVGPSGSRPFPDFWDDHSREEIPPPAYGH). Over residues 209-219 (SVNTLDQSSGP) the composition is skewed to polar residues. A compositionally biased stretch (basic residues) spans 351–365 (SGRHPRPHGKKRKKR). The segment covering 366-376 (VVDLRRPKTTD) has biased composition (basic and acidic residues). Positions 380 to 390 (SVSGESVFSSE) are enriched in low complexity. 2 stretches are compositionally biased toward polar residues: residues 438–462 (GEHTLTRRSVPSMSEVAQPSSSRNS) and 477–503 (PRNSIRLPSSDRANNPLTTAHLPSSAI).

It belongs to the MDM34 family. In terms of assembly, component of the ER-mitochondria encounter structure (ERMES) or MDM complex, composed of mmm1, mdm10, mdm12 and mdm34.

It localises to the mitochondrion outer membrane. In terms of biological role, component of the ERMES/MDM complex, which serves as a molecular tether to connect the endoplasmic reticulum (ER) and mitochondria. Components of this complex are involved in the control of mitochondrial shape and protein biogenesis, and function in nonvesicular lipid trafficking between the ER and mitochondria. Mdm34 is required for the interaction of the ER-resident membrane protein mmm1 and the outer mitochondrial membrane-resident beta-barrel protein mdm10. This Talaromyces stipitatus (strain ATCC 10500 / CBS 375.48 / QM 6759 / NRRL 1006) (Penicillium stipitatum) protein is Mitochondrial distribution and morphology protein 34.